A 243-amino-acid chain; its full sequence is Carboxy-S-adenosyl-L-methionine synthase (243 aa).

S-adenosyl-L-methionine contacts are provided by residues Y40, 65-67, 90-91, 118-119, N133, and R200; these read GCS, DN, and DI.

Belongs to the class I-like SAM-binding methyltransferase superfamily. Cx-SAM synthase family. Homodimer.

The enzyme catalyses prephenate + S-adenosyl-L-methionine = carboxy-S-adenosyl-L-methionine + 3-phenylpyruvate + H2O. Its function is as follows. Catalyzes the conversion of S-adenosyl-L-methionine (SAM) to carboxy-S-adenosyl-L-methionine (Cx-SAM). In Shewanella woodyi (strain ATCC 51908 / MS32), this protein is Carboxy-S-adenosyl-L-methionine synthase.